Consider the following 353-residue polypeptide: Photosystem II protein D1 (353 aa).

Residue threonine 2 is modified to N-acetylthreonine. Phosphothreonine is present on threonine 2. Transmembrane regions (helical) follow at residues 29-46 (YIGWFGVLMIPTLLTATS), 118-133 (HFLLGVACYMGREWEL), and 142-156 (WIAIAYSAPVAAATA). Histidine 118 contacts chlorophyll a. Residue tyrosine 126 coordinates pheophytin a. Residues aspartate 170 and glutamate 189 each coordinate [CaMn4O5] cluster. Residues 197–218 (FHMLGVAGVFGGSLFSAMHGSL) form a helical membrane-spanning segment. Position 198 (histidine 198) interacts with chlorophyll a. A quinone-binding positions include histidine 215 and 264–265 (SF). Histidine 215 lines the Fe cation pocket. Histidine 272 contacts Fe cation. The helical transmembrane segment at 274 to 288 (FLAAWPVIGIWFTAL) threads the bilayer. [CaMn4O5] cluster contacts are provided by histidine 332, glutamate 333, aspartate 342, and alanine 344. The propeptide occupies 345–353 (TFEVSATNA).

The protein belongs to the reaction center PufL/M/PsbA/D family. In terms of assembly, PSII is composed of 1 copy each of membrane proteins PsbA, PsbB, PsbC, PsbD, PsbE, PsbF, PsbH, PsbI, PsbJ, PsbK, PsbL, PsbM, PsbT, PsbX, PsbY, PsbZ, Psb30/Ycf12, at least 3 peripheral proteins of the oxygen-evolving complex and a large number of cofactors. It forms dimeric complexes. The cofactor is The D1/D2 heterodimer binds P680, chlorophylls that are the primary electron donor of PSII, and subsequent electron acceptors. It shares a non-heme iron and each subunit binds pheophytin, quinone, additional chlorophylls, carotenoids and lipids. D1 provides most of the ligands for the Mn4-Ca-O5 cluster of the oxygen-evolving complex (OEC). There is also a Cl(-1) ion associated with D1 and D2, which is required for oxygen evolution. The PSII complex binds additional chlorophylls, carotenoids and specific lipids.. In terms of processing, tyr-161 forms a radical intermediate that is referred to as redox-active TyrZ, YZ or Y-Z. C-terminally processed by CTPA; processing is essential to allow assembly of the oxygen-evolving complex and thus photosynthetic growth.

The protein resides in the plastid membrane. It carries out the reaction 2 a plastoquinone + 4 hnu + 2 H2O = 2 a plastoquinol + O2. Photosystem II (PSII) is a light-driven water:plastoquinone oxidoreductase that uses light energy to abstract electrons from H(2)O, generating O(2) and a proton gradient subsequently used for ATP formation. It consists of a core antenna complex that captures photons, and an electron transfer chain that converts photonic excitation into a charge separation. The D1/D2 (PsbA/PsbD) reaction center heterodimer binds P680, the primary electron donor of PSII as well as several subsequent electron acceptors. The protein is Photosystem II protein D1 of Cuscuta gronovii (Common dodder).